We begin with the raw amino-acid sequence, 259 residues long: HTH-type transcriptional regulator Rv1719 (259 aa).

Residues 13–75 (IQVIARAAEL…GARGPYRLGP (63 aa)) form the HTH iclR-type domain. Residues 35 to 54 (QAEIGERVGMARSTVSRILN) constitute a DNA-binding region (H-T-H motif). In terms of domain architecture, IclR-ED spans 88–259 (VVTEMHPFLT…AWFNGTEDRK (172 aa)).

In terms of assembly, homodimer.

In terms of biological role, binds to the upstream region of Rv1714 and probably modulates the expression of the downstream gene(s). This chain is HTH-type transcriptional regulator Rv1719, found in Mycobacterium tuberculosis (strain ATCC 25618 / H37Rv).